A 107-amino-acid polypeptide reads, in one-letter code: UPF0145 protein YbjQ (107 aa).

The protein belongs to the UPF0145 family.

The protein is UPF0145 protein YbjQ of Escherichia coli (strain SMS-3-5 / SECEC).